Consider the following 465-residue polypeptide: Neuraminidase (465 aa).

Residues 1-11 (MLPSTIQTLTL) lie on the Intravirion side of the membrane. A helical transmembrane segment spans residues 12-34 (FLTSGGVLLSLYVSASLSYLLYS). The tract at residues 13-35 (LTSGGVLLSLYVSASLSYLLYSD) is involved in apical transport and lipid raft association. At 35-465 (DILLRFSSKI…DTVTGVDMAL (431 aa)) the chain is on the virion surface side. Residues 38–85 (LRFSSKITAPTMTLDCANASNVQAVNRSATKEMTFLLPEPEWTYPRLS) form a hypervariable stalk region region. Residues asparagine 55 and asparagine 63 are each glycosylated (N-linked (GlcNAc...) asparagine; by host). Disulfide bonds link cysteine 86/cysteine 419, cysteine 121/cysteine 126, cysteine 181/cysteine 228, cysteine 230/cysteine 235, cysteine 276/cysteine 290, cysteine 278/cysteine 288, cysteine 317/cysteine 336, and cysteine 423/cysteine 446. Positions 88–465 (GSTFQKALLI…DTVTGVDMAL (378 aa)) are head of neuraminidase. Arginine 115 contacts substrate. An N-linked (GlcNAc...) asparagine; by host glycan is attached at asparagine 143. Residue aspartate 148 is the Proton donor/acceptor of the active site. Residue arginine 149 participates in substrate binding. Substrate is bound at residue 274–275 (EE). Asparagine 283 carries N-linked (GlcNAc...) asparagine; by host glycosylation. Substrate is bound at residue arginine 291. Ca(2+) contacts are provided by aspartate 292 and aspartate 323. Residues 328–347 (DDGSITGPCESDGDKGRGGI) are disordered. Arginine 373 contributes to the substrate binding site. The active-site Nucleophile is the tyrosine 408.

It belongs to the glycosyl hydrolase 34 family. Homotetramer. Ca(2+) is required as a cofactor. In terms of processing, N-glycosylated.

The protein localises to the virion membrane. The protein resides in the host apical cell membrane. It catalyses the reaction Hydrolysis of alpha-(2-&gt;3)-, alpha-(2-&gt;6)-, alpha-(2-&gt;8)- glycosidic linkages of terminal sialic acid residues in oligosaccharides, glycoproteins, glycolipids, colominic acid and synthetic substrates.. Inhibited by the neuraminidase inhibitors zanamivir (Relenza) and oseltamivir (Tamiflu). These drugs interfere with the release of progeny virus from infected cells and are effective against all influenza strains. Resistance to neuraminidase inhibitors is quite rare. Its function is as follows. Catalyzes the removal of terminal sialic acid residues from viral and cellular glycoconjugates. Cleaves off the terminal sialic acids on the glycosylated HA during virus budding to facilitate virus release. Additionally helps virus spread through the circulation by further removing sialic acids from the cell surface. These cleavages prevent self-aggregation and ensure the efficient spread of the progeny virus from cell to cell. Otherwise, infection would be limited to one round of replication. Described as a receptor-destroying enzyme because it cleaves a terminal sialic acid from the cellular receptors. May facilitate viral invasion of the upper airways by cleaving the sialic acid moieties on the mucin of the airway epithelial cells. Likely to plays a role in the budding process through its association with lipid rafts during intracellular transport. May additionally display a raft-association independent effect on budding. Plays a role in the determination of host range restriction on replication and virulence. Sialidase activity in late endosome/lysosome traffic seems to enhance virus replication. The sequence is that of Neuraminidase from Influenza B virus (strain B/Memphis/3/1989).